The chain runs to 786 residues: Phenylalanine--tRNA ligase beta subunit (786 aa).

One can recognise a tRNA-binding domain in the interval 39-150; that stretch reads LRAPDRVVVG…GELKLGKPLH (112 aa). The B5 domain occupies 397–474; it reads YKPATITVDL…RLLGIDTILA (78 aa). Mg(2+)-binding residues include Asp452, Asp458, Glu461, and Glu462. Positions 693-786 constitute an FDX-ACB domain; the sequence is SKFPKLQRDL…LNHRFGAKLR (94 aa).

Belongs to the phenylalanyl-tRNA synthetase beta subunit family. Type 1 subfamily. Tetramer of two alpha and two beta subunits. Requires Mg(2+) as cofactor.

The protein localises to the cytoplasm. It carries out the reaction tRNA(Phe) + L-phenylalanine + ATP = L-phenylalanyl-tRNA(Phe) + AMP + diphosphate + H(+). The polypeptide is Phenylalanine--tRNA ligase beta subunit (Wolinella succinogenes (strain ATCC 29543 / DSM 1740 / CCUG 13145 / JCM 31913 / LMG 7466 / NCTC 11488 / FDC 602W) (Vibrio succinogenes)).